The sequence spans 253 residues: Small ribosomal subunit protein uS2 (253 aa).

The protein belongs to the universal ribosomal protein uS2 family.

The sequence is that of Small ribosomal subunit protein uS2 from Chlorobium luteolum (strain DSM 273 / BCRC 81028 / 2530) (Pelodictyon luteolum).